A 433-amino-acid chain; its full sequence is Enolase (433 aa).

Gln-164 contributes to the (2R)-2-phosphoglycerate binding site. The active-site Proton donor is Glu-206. The Mg(2+) site is built by Asp-243, Glu-289, and Asp-316. (2R)-2-phosphoglycerate is bound by residues Lys-341, Arg-370, Ser-371, and Lys-392. Lys-341 serves as the catalytic Proton acceptor.

It belongs to the enolase family. Mg(2+) is required as a cofactor.

It is found in the cytoplasm. The protein localises to the secreted. The protein resides in the cell surface. It carries out the reaction (2R)-2-phosphoglycerate = phosphoenolpyruvate + H2O. Its pathway is carbohydrate degradation; glycolysis; pyruvate from D-glyceraldehyde 3-phosphate: step 4/5. In terms of biological role, catalyzes the reversible conversion of 2-phosphoglycerate (2-PG) into phosphoenolpyruvate (PEP). It is essential for the degradation of carbohydrates via glycolysis. The chain is Enolase from Borrelia hermsii (strain HS1 / DAH).